Reading from the N-terminus, the 339-residue chain is UDP-N-acetylglucosamine--N-acetylmuramyl-(pentapeptide) pyrophosphoryl-undecaprenol N-acetylglucosamine transferase (339 aa).

Residues threonine 11–glycine 13, asparagine 127, arginine 170, serine 188, isoleucine 235, and glutamine 280 contribute to the UDP-N-acetyl-alpha-D-glucosamine site.

It belongs to the glycosyltransferase 28 family. MurG subfamily.

It localises to the cell inner membrane. The catalysed reaction is di-trans,octa-cis-undecaprenyl diphospho-N-acetyl-alpha-D-muramoyl-L-alanyl-D-glutamyl-meso-2,6-diaminopimeloyl-D-alanyl-D-alanine + UDP-N-acetyl-alpha-D-glucosamine = di-trans,octa-cis-undecaprenyl diphospho-[N-acetyl-alpha-D-glucosaminyl-(1-&gt;4)]-N-acetyl-alpha-D-muramoyl-L-alanyl-D-glutamyl-meso-2,6-diaminopimeloyl-D-alanyl-D-alanine + UDP + H(+). It functions in the pathway cell wall biogenesis; peptidoglycan biosynthesis. Functionally, cell wall formation. Catalyzes the transfer of a GlcNAc subunit on undecaprenyl-pyrophosphoryl-MurNAc-pentapeptide (lipid intermediate I) to form undecaprenyl-pyrophosphoryl-MurNAc-(pentapeptide)GlcNAc (lipid intermediate II). This is UDP-N-acetylglucosamine--N-acetylmuramyl-(pentapeptide) pyrophosphoryl-undecaprenol N-acetylglucosamine transferase from Thermotoga maritima (strain ATCC 43589 / DSM 3109 / JCM 10099 / NBRC 100826 / MSB8).